The sequence spans 217 residues: 3,4-dihydroxy-2-butanone 4-phosphate synthase (217 aa).

Residues R37–E38, D42, R150–T154, and E174 contribute to the D-ribulose 5-phosphate site. E38 serves as a coordination point for Mg(2+). H153 serves as a coordination point for Mg(2+).

It belongs to the DHBP synthase family. As to quaternary structure, homodimer. Mg(2+) serves as cofactor. Requires Mn(2+) as cofactor.

The enzyme catalyses D-ribulose 5-phosphate = (2S)-2-hydroxy-3-oxobutyl phosphate + formate + H(+). It functions in the pathway cofactor biosynthesis; riboflavin biosynthesis; 2-hydroxy-3-oxobutyl phosphate from D-ribulose 5-phosphate: step 1/1. In terms of biological role, catalyzes the conversion of D-ribulose 5-phosphate to formate and 3,4-dihydroxy-2-butanone 4-phosphate. In Pectobacterium carotovorum subsp. carotovorum (strain PC1), this protein is 3,4-dihydroxy-2-butanone 4-phosphate synthase.